The sequence spans 214 residues: Dephospho-CoA kinase (214 aa).

Residues 3-202 (KIGLTGGIGS…DRWLALAGAA (200 aa)) form the DPCK domain. An ATP-binding site is contributed by 11-16 (GSGKSR).

It belongs to the CoaE family.

The protein resides in the cytoplasm. It catalyses the reaction 3'-dephospho-CoA + ATP = ADP + CoA + H(+). Its pathway is cofactor biosynthesis; coenzyme A biosynthesis; CoA from (R)-pantothenate: step 5/5. Catalyzes the phosphorylation of the 3'-hydroxyl group of dephosphocoenzyme A to form coenzyme A. The sequence is that of Dephospho-CoA kinase from Bordetella bronchiseptica (strain ATCC BAA-588 / NCTC 13252 / RB50) (Alcaligenes bronchisepticus).